We begin with the raw amino-acid sequence, 442 residues long: Endothelin receptor type B (442 aa).

The first 26 residues, Met1 to Gly26, serve as a signal peptide directing secretion. At Glu27–Lys101 the chain is on the extracellular side. 2 N-linked (GlcNAc...) asparagine glycosylation sites follow: Asn60 and Asn97. A helical membrane pass occupies residues Tyr102–Ile126. At Tyr127 to Asn137 the chain is on the cytoplasmic side. The chain crosses the membrane as a helical span at residues Ile138–Leu163. Residues Ala164 to Lys175 lie on the Extracellular side of the membrane. An intrachain disulfide couples Cys174 to Cys255. Residues Leu176–Ile197 form a helical membrane-spanning segment. Residues Asp198–Thr218 lie on the Cytoplasmic side of the membrane. The chain crosses the membrane as a helical span at residues Ala219–Ile243. The Extracellular portion of the chain corresponds to Thr244 to Thr271. Residues Ala272–Met296 traverse the membrane as a helical segment. At Thr297–Thr324 the chain is on the cytoplasmic side. Ser305 bears the Phosphoserine mark. A helical transmembrane segment spans residues Val325 to Tyr350. Residues Asp351–Ser362 are Extracellular-facing. A helical membrane pass occupies residues Phe363–Val389. Over Ser390–Ser442 the chain is Cytoplasmic. 3 S-palmitoyl cysteine lipidation sites follow: Cys402, Cys403, and Cys405. Position 419 is a phosphoserine (Ser419). Phosphotyrosine is present on Tyr439. A phosphoserine mark is found at Ser440, Ser441, and Ser442.

It belongs to the G-protein coupled receptor 1 family. Endothelin receptor subfamily. EDNRB sub-subfamily. As to expression, widely distributed in cell types of a variety of tissues.

It is found in the cell membrane. Its function is as follows. Non-specific receptor for endothelin 1, 2, and 3. Mediates its action by association with G proteins that activate a phosphatidylinositol-calcium second messenger system. The chain is Endothelin receptor type B from Rattus norvegicus (Rat).